Here is a 937-residue protein sequence, read N- to C-terminus: MTDSKYFTTNKKGEIFELKAELNNEKKEKRKEAVKKVIAAMTVGKDVSSLFPDVVNCMQTDNLELKKLVYLYLMNYAKSQPDMAIMAVNSFVKDCEDPNPLIRALAVRTMGCIRVDKITEYLCEPLRKCLKDEDPYVRKTAAVCVAKLHDINAQMVEDQGFLDSLRDLIADSNPMVVANAVAALSEISESHPNSNLLDLNPQNINKLLTALNECTEWGQIFILDCLSNYNPKDDREAQSICERVTPRLSHANSAVVLSAVKVLMKFLELLPKESDYYNMLLKKLAPPLVTLLSGEPEVQYVALRNINLIVQKRPEILKQEIKVFFVKYNDPIYVKLEKLDIMIRLASQANIAQVLAELKEYATEVDVDFVRKAVRAIGRCAIKVEQSAERCVSTLLDLIQTKVNYVVQEAIVVIRDIFRKYPNKYESIIATLCENLDSLDEPDARAAMIWIVGEYAERIDNADELLESFLEGFHDESTQVQLTLLTAIVKLFLKKPSETQELVQQVLSLATQDSDNPDLRDRGYIYWRLLSTDPVTAKEVVLSEKPLISEETDLIEPTLLDELICHIGSLASVYHKPPNAFVEGSHGIHRKHLPIHHGSTDAGDSPVGTTTATNLEQPQVIPSQGDLLGDLLNLDLGPPVNVPQVSSMQMGAVDLLGGGLDSLVGQSFIPSSVPATFAPSPTPAVVSSGLNDLFELSTGIGMAPGGYVAPKAVWLPAVKAKGLEISGTFTHRQGHIYMEMNFTNKALQHMTDFAIQFNKNSFGVIPSTPLAIHTPLMPNQSIDVSLPLNTLGPVMKMEPLNNLQVAVKNNIDVFYFSCLIPLNVLFVEDGKMERQVFLATWKDIPNENELQFQIKECHLNADTVSSKLQNNNVYTIAKRNVEGQDMLYQSLKLTNGIWILAELRIQPGNPNYTLSLKCRAPEVSQYIYQVYDSILKN.

The residue at position 2 (Thr-2) is an N-acetylthreonine. Ser-4 carries the post-translational modification Phosphoserine. Position 265 is an N6-acetyllysine (Lys-265). Tyr-737 and Tyr-928 each carry phosphotyrosine.

Belongs to the adaptor complexes large subunit family. Adapter protein complex 2 (AP-2) is a heterotetramer composed of two large adaptins (alpha-type subunit AP2A1 or AP2A2 and beta-type subunit AP2B1), a medium adaptin (mu-type subunit AP2M1) and a small adaptin (sigma-type subunit AP2S1). Interacts with EPN1. Interacts with EPS15; clathrin competes with EPS15. Interacts with SNAP91; clathrin competes with SNAP91. Interacts with CLTC; clathrin competes with EPS15, SNAP91 and PIP5K1C. Interacts with LDLRAP1. Interacts with AMPH and BIN1. Interacts with ARF6 (GDP-bound). Interacts (dephosphorylated at Tyr-737) with ARRB1; phosphorylation of AP2B1 at Tyr-737 disrupts the interaction. Interacts with SLC2A8. Interacts with SCYL1 and SCYL2. Interacts with TGFBR1 and TGFBR2. Interacts with PIP5K1C; clathrin competes with PIP5K1C. Interacts with DENND1B. Interacts with FCHO1. Interacts with RFTN1. Interacts with KIAA1107. Together with AP2A1 or AP2A2 and AP2M1, it interacts with ADAM10; this interaction facilitates ADAM10 endocytosis from the plasma membrane during long-term potentiation in hippocampal neurons. Post-translationally, the N-terminus is blocked. Phosphorylation at Tyr-737 by SRC occurs at the plasma membrane in clathrin-coated vesicles (CCVs).

It is found in the cell membrane. Its subcellular location is the membrane. It localises to the coated pit. Functionally, component of the adaptor protein complex 2 (AP-2). Adaptor protein complexes function in protein transport via transport vesicles in different membrane traffic pathways. Adaptor protein complexes are vesicle coat components and appear to be involved in cargo selection and vesicle formation. AP-2 is involved in clathrin-dependent endocytosis in which cargo proteins are incorporated into vesicles surrounded by clathrin (clathrin-coated vesicles, CCVs) which are destined for fusion with the early endosome. The clathrin lattice serves as a mechanical scaffold but is itself unable to bind directly to membrane components. Clathrin-associated adaptor protein (AP) complexes which can bind directly to both the clathrin lattice and to the lipid and protein components of membranes are considered to be the major clathrin adaptors contributing the CCV formation. AP-2 also serves as a cargo receptor to selectively sort the membrane proteins involved in receptor-mediated endocytosis. AP-2 seems to play a role in the recycling of synaptic vesicle membranes from the presynaptic surface. AP-2 recognizes Y-X-X-[FILMV] (Y-X-X-Phi) and [ED]-X-X-X-L-[LI] endocytosis signal motifs within the cytosolic tails of transmembrane cargo molecules. AP-2 may also play a role in maintaining normal post-endocytic trafficking through the ARF6-regulated, non-clathrin pathway. During long-term potentiation in hippocampal neurons, AP-2 is responsible for the endocytosis of ADAM10. The AP-2 beta subunit acts via its C-terminal appendage domain as a scaffolding platform for endocytic accessory proteins; at least some clathrin-associated sorting proteins (CLASPs) are recognized by their [DE]-X(1,2)-F-X-X-[FL]-X-X-X-R motif. The AP-2 beta subunit binds to clathrin heavy chain, promoting clathrin lattice assembly; clathrin displaces at least some CLASPs from AP2B1 which probably then can be positioned for further coat assembly. This is AP-2 complex subunit beta (AP2B1) from Bos taurus (Bovine).